We begin with the raw amino-acid sequence, 513 residues long: Sterol 14-alpha demethylase (513 aa).

The helical transmembrane segment at 10 to 30 (FTLVSAYAAAGLLAIIVLNLL) threads the bilayer. Asparagine 37 and asparagine 406 each carry an N-linked (GlcNAc...) asparagine glycan. Cysteine 453 provides a ligand contact to heme.

This sequence belongs to the cytochrome P450 family. Heme is required as a cofactor.

The protein resides in the endoplasmic reticulum membrane. It catalyses the reaction a 14alpha-methyl steroid + 3 reduced [NADPH--hemoprotein reductase] + 3 O2 = a Delta(14) steroid + formate + 3 oxidized [NADPH--hemoprotein reductase] + 4 H2O + 4 H(+). The enzyme catalyses a 14alpha-methyl steroid + reduced [NADPH--hemoprotein reductase] + O2 = a 14alpha-hydroxymethyl steroid + oxidized [NADPH--hemoprotein reductase] + H2O + H(+). The catalysed reaction is a 14alpha-hydroxymethyl steroid + reduced [NADPH--hemoprotein reductase] + O2 = a 14alpha-formyl steroid + oxidized [NADPH--hemoprotein reductase] + 2 H2O + H(+). It carries out the reaction a 14alpha-formyl steroid + reduced [NADPH--hemoprotein reductase] + O2 = a Delta(14) steroid + formate + oxidized [NADPH--hemoprotein reductase] + H2O + 2 H(+). It catalyses the reaction lanosterol + 3 reduced [NADPH--hemoprotein reductase] + 3 O2 = 4,4-dimethyl-5alpha-cholesta-8,14,24-trien-3beta-ol + formate + 3 oxidized [NADPH--hemoprotein reductase] + 4 H2O + 4 H(+). The enzyme catalyses lanosterol + reduced [NADPH--hemoprotein reductase] + O2 = 32-hydroxylanosterol + oxidized [NADPH--hemoprotein reductase] + H2O + H(+). The catalysed reaction is 32-hydroxylanosterol + reduced [NADPH--hemoprotein reductase] + O2 = 32-oxolanosterol + oxidized [NADPH--hemoprotein reductase] + 2 H2O + H(+). It carries out the reaction 32-oxolanosterol + reduced [NADPH--hemoprotein reductase] + O2 = 4,4-dimethyl-5alpha-cholesta-8,14,24-trien-3beta-ol + formate + oxidized [NADPH--hemoprotein reductase] + H2O + 2 H(+). It catalyses the reaction eburicol + 3 reduced [NADPH--hemoprotein reductase] + 3 O2 = 14-demethyleburicol + formate + 3 oxidized [NADPH--hemoprotein reductase] + 4 H2O + 4 H(+). The enzyme catalyses eburicol + reduced [NADPH--hemoprotein reductase] + O2 = 32-hydroxyeburicol + oxidized [NADPH--hemoprotein reductase] + H2O + H(+). The catalysed reaction is 32-hydroxyeburicol + reduced [NADPH--hemoprotein reductase] + O2 = 32-oxoeburicol + oxidized [NADPH--hemoprotein reductase] + 2 H2O + H(+). It carries out the reaction 32-oxoeburicol + reduced [NADPH--hemoprotein reductase] + O2 = 14-demethyleburicol + formate + oxidized [NADPH--hemoprotein reductase] + H2O + 2 H(+). Its pathway is steroid biosynthesis; sterol biosynthesis. In terms of biological role, sterol 14alpha-demethylase, encoded by cyp51A, cyp51B and cyp51C, that plays a critical role in the third module of ergosterol biosynthesis pathway, being ergosterol the major sterol component in fungal membranes that participates in a variety of functions. The third module or late pathway involves the ergosterol synthesis itself through consecutive reactions that mainly occur in the endoplasmic reticulum (ER) membrane. In filamentous fungi, during the initial step of this module, lanosterol (lanosta-8,24-dien-3beta-ol) can be metabolized to eburicol. Sterol 14alpha-demethylase catalyzes the three-step oxidative removal of the 14alpha-methyl group (C-32) of both these sterols in the form of formate, and converts eburicol and lanosterol to 14-demethyleburicol (4,4,24-trimethylergosta-8,14,24(28)-trienol) and 4,4-dimethyl-5alpha-cholesta-8,14,24-trien-3beta-ol, respectively, which are further metabolized by other enzymes in the pathway to ergosterol. Can also use substrates not intrinsic to fungi, such as 24,25-dihydrolanosterol (DHL), producing 4,4'-dimethyl-8,14-cholestadien-3-beta-ol, but at lower rates than the endogenous substrates. As a target of azole drugs, plays a crucial role in azole susceptibility. The sequence is that of Sterol 14-alpha demethylase from Aspergillus flavus (strain ATCC 200026 / FGSC A1120 / IAM 13836 / NRRL 3357 / JCM 12722 / SRRC 167).